We begin with the raw amino-acid sequence, 252 residues long: Ribosomal RNA small subunit methyltransferase NEP1 (252 aa).

Residues M176, G209, G214, and 227–232 contribute to the S-adenosyl-L-methionine site; that span reads ISNYPL.

Belongs to the class IV-like SAM-binding methyltransferase superfamily. RNA methyltransferase NEP1 family. Homodimer. Part of the small subunit (SSU) processome, composed of more than 70 proteins and the RNA chaperone small nucleolar RNA (snoRNA) U3.

The protein resides in the nucleus. The protein localises to the nucleolus. It catalyses the reaction a pseudouridine in rRNA + S-adenosyl-L-methionine = an N(1)-methylpseudouridine in rRNA + S-adenosyl-L-homocysteine + H(+). Functionally, S-adenosyl-L-methionine-dependent pseudouridine N(1)-methyltransferase that methylates a pseudouridine in 18S rRNA. Involved the biosynthesis of the hypermodified N1-methyl-N3-(3-amino-3-carboxypropyl) pseudouridine (m1acp3-Psi) conserved in eukaryotic 18S rRNA. Also has an essential role in 40S ribosomal subunit biogenesis independent on its methyltransferase activity, facilitating the incorporation of ribosomal protein S19 during the formation of pre-ribosomes. In terms of biological role, S-adenosyl-L-methionine-dependent pseudouridine N(1)-methyltransferase that methylates pseudouridine at position in 18S rRNA. Involved the biosynthesis of the hypermodified N1-methyl-N3-(3-amino-3-carboxypropyl) pseudouridine (m1acp3-Psi) conserved in eukaryotic 18S rRNA. Is not able to methylate uridine at this position. Also has an essential role in 40S ribosomal subunit biogenesis independent on its methyltransferase activity, facilitating the incorporation of ribosomal protein S19 during the formation of pre-ribosomes. Part of the small subunit (SSU) processome, first precursor of the small eukaryotic ribosomal subunit. During the assembly of the SSU processome in the nucleolus, many ribosome biogenesis factors, an RNA chaperone and ribosomal proteins associate with the nascent pre-rRNA and work in concert to generate RNA folding, modifications, rearrangements and cleavage as well as targeted degradation of pre-ribosomal RNA by the RNA exosome. The sequence is that of Ribosomal RNA small subunit methyltransferase NEP1 from Drosophila melanogaster (Fruit fly).